The following is a 1281-amino-acid chain: MAQSKRHVYSRTPSGSRMSAEASARPLRVGSRVEVIGKGHRGTVAYVGATLFATGKWVGVILDEAKGKNDGTVQGRKYFTCDEGHGIFVRQSQIQVFEDGADTTSPETPDSSASKVLRREGTDSNAKTSKLRGPKPKKAPTARKTTTRRPKPTRPASTGVAGASSSLGPSGSASAGELSSSEPSTPAQTPLAAPIIPTPALTSPGAAPPLPSPSKEEEGLRAQVRDLEEKLETLRLKRAEDKAKLKELEKHKIQLEQVQEWKSKMQEQQADLQRRLKEARKEAKEALEAKERYMEEMADTADAIEMATLDKEMAEERAESLQQEVEALKERVDELTTDLEILKAEIEEKGSDGAASSYQLKQLEEQNARLKDALVRMRDLSSSEKQEHVKLQKLMEKKNQELEVVRQQRERLQEELSQAESTIDELKEQVDAALGAEEMVEMLTDRNLNLEEKVRELRETVGDLEAMNEMNDELQENARETELELREQLDMAGARVREAQKRVEAAQETVADYQQTIKKYRQLTAHLQDVNRELTNQQEASVERQQQPPPETFDFKIKFAETKAHAKAIEMELRQMEVAQANRHMSLLTAFMPDSFLRPGGDHDCVLVLLLMPRLICKAELIRKQAQEKFDLSENCSERPGLRGAAGEQLSFAAGLVYSLSLLQATLHRYEHALSQCSVDVYKKVGSLYPEMSAHERSLDFLIELLHKDQLDETVNVEPLTKAIKYYQHLYSIHLAEQPEDSTMQLADHIKFTQSALDCMSVEVGRLRAFLQGGQEASDIALLLRDLETSCSDIRQFCKKIRRRMPGTDAPGIPAALAFGAQVSDTLLDCRKHLTWVVAVLQEVAAAAAQLIAPLAENEGLPVAALEELAFKASEQIYGTPSSSPYECLRQSCNILISTMNKLATAMQEGEYDAERPPSKPPPVELRAAALRAEITDAEGLGLKLEDRETVIKELKKSLKIKGEELSEANVRLSLLEKKLDSAAKDADERIEKVQTRLEETQALLRKKEKEFEETMDALQADIDQLEAEKAELKQRLNSQSKRTIEGIRGPPPSGIATLVSGIAGEEQQRGGAPGQAPGIVPGPGLVKDSPLLLQQISAMRLHISQLQHENSVLKGAQMKASLAALPPLHVAKLSLPPHEGPGSELAAGALYRKTNQLLETLNQLSTHTHVVDITRSSPAAKSPSAQLLEQVTQLKSLSDTIEKLKDEVLKETVSQRPGATVPTDFATFPSSAFLRAKEEQQDDTVYMGKVTFSCAAGLGQRHRLVLTQEQLHQLHDRLIS.

Positions 1-25 (MAQSKRHVYSRTPSGSRMSAEASAR) are disordered. Residues 48-90 (GATLFATGKWVGVILDEAKGKNDGTVQGRKYFTCDEGHGIFVR) enclose the CAP-Gly domain. The interval 99 to 225 (DGADTTSPET…EEEGLRAQVR (127 aa)) is disordered. Positions 102-114 (DTTSPETPDSSAS) are enriched in polar residues. 4 positions are modified to phosphothreonine: Thr-108, Thr-145, Thr-146, and Thr-147. Positions 129 to 152 (SKLRGPKPKKAPTARKTTTRRPKP) are enriched in basic residues. Residues 161–205 (AGASSSLGPSGSASAGELSSSEPSTPAQTPLAAPIIPTPALTSPG) show a composition bias toward low complexity. 2 positions are modified to phosphoserine: Ser-179 and Ser-212. Basic and acidic residues predominate over residues 214–225 (SKEEEGLRAQVR). Coiled coils occupy residues 217–540 (EEGL…QQEA) and 952–1043 (IKEL…QSKR). The interval 911 to 1281 (EYDAERPPSK…LHQLHDRLIS (371 aa)) is interaction with HPS6. A disordered region spans residues 1065 to 1084 (GEEQQRGGAPGQAPGIVPGP).

Belongs to the dynactin 150 kDa subunit family. As to quaternary structure, monomer and homodimer. Subunit of dynactin, a multiprotein complex part of a tripartite complex with dynein and a adapter, such as BICDL1, BICD2 or HOOK3. The dynactin complex is built around ACTR1A/ACTB filament and consists of an actin-related filament composed of a shoulder domain, a pointed end and a barbed end. Its length is defined by its flexible shoulder domain. The soulder is composed of 2 DCTN1 subunits, 4 DCTN2 and 2 DCTN3. DCTN1/p150(glued) binds directly to microtubules and to cytoplasmic dynein. The 4 DCNT2 (via N-terminus) bind the ACTR1A filament and act as molecular rulers to determine the length. The pointed end is important for binding dynein-dynactin cargo adapters. Consists of 4 subunits: ACTR10, DCNT4, DCTN5 and DCTN6. The barbed end is composed of a CAPZA1:CAPZB heterodimers, which binds ACTR1A/ACTB filament and dynactin and stabilizes dynactin. Interacts with the C-terminus of MAPRE1, MAPRE2 and MAPRE3. Interacts (via C-terminus) with SNX6. Interacts with CLN3, DYNAP, ECPAS and FBXL5. Interacts with MISP; this interaction regulates its distribution at the cell cortex. Interacts with CEP131. Interacts with CEP126. Interacts with CLIP1. Interacts with dynein intermediate chain and dynein heavy chain. Interacts with PLK1 (via POLO-box domain). Interacts with TBCB. Binds preferentially to tyrosinated microtubules than to detyrosinated microtubules. Interacts with PARD6A. Interacts with HPS6. Interacts with KIF3A. Interacts with BICD2. Interacts with DST (isoform 9). Interacts with DST (isoform 1). Identified in a complex with MREG and RILP. Interacts with BCCIP (isoform 2/alpha). Interacts with DCDC1. Interacts with AKNA. Interacts with DYNC1I2. Interacts with RUFY3 and RUFY4. Post-translationally, ubiquitinated by a SCF complex containing FBXL5, leading to its degradation by the proteasome. Phosphorylation by SLK at Thr-145, Thr-146 and Thr-147 targets DCTN1 to the centrosome. It is uncertain if SLK phosphorylates all three threonines or one or two of them. PLK1-mediated phosphorylation at Ser-179 is essential for its localization in the nuclear envelope, promotes its dissociation from microtubules during early mitosis and positively regulates nuclear envelope breakdown during prophase.

It localises to the cytoplasm. The protein resides in the cytoskeleton. Its subcellular location is the microtubule organizing center. The protein localises to the centrosome. It is found in the centriole. It localises to the spindle. The protein resides in the nucleus envelope. Its subcellular location is the cell cortex. Functionally, part of the dynactin complex that activates the molecular motor dynein for ultra-processive transport along microtubules. Plays a key role in dynein-mediated retrograde transport of vesicles and organelles along microtubules by recruiting and tethering dynein to microtubules. Binds to both dynein and microtubules providing a link between specific cargos, microtubules and dynein. Essential for targeting dynein to microtubule plus ends, recruiting dynein to membranous cargos and enhancing dynein processivity (the ability to move along a microtubule for a long distance without falling off the track). Can also act as a brake to slow the dynein motor during motility along the microtubule. Can regulate microtubule stability by promoting microtubule formation, nucleation and polymerization and by inhibiting microtubule catastrophe in neurons. Inhibits microtubule catastrophe by binding both to microtubules and to tubulin, leading to enhanced microtubule stability along the axon. Plays a role in metaphase spindle orientation. Plays a role in centriole cohesion and subdistal appendage organization and function. Its recruitment to the centriole in a KIF3A-dependent manner is essential for the maintenance of centriole cohesion and the formation of subdistal appendage. Also required for microtubule anchoring at the mother centriole. Plays a role in primary cilia formation. This is Dynactin subunit 1 (DCTN1) from Sus scrofa (Pig).